Here is a 261-residue protein sequence, read N- to C-terminus: General secretion pathway protein N (261 aa).

At 1–10 (MRLEMIGLRT) the chain is on the cytoplasmic side. A helical membrane pass occupies residues 11-31 (WLLATVVGWALLVCVLAVAGL). Topologically, residues 32-261 (GKRVELLPDD…QGGSTPGQTQ (230 aa)) are periplasmic. Positions 158 to 261 (VFNGQGGQPP…QGGSTPGQTQ (104 aa)) are disordered. Residues 179–200 (AVPPLPPNVPPAPATPAPPPAE) are compositionally biased toward pro residues. A compositionally biased stretch (low complexity) spans 201–211 (VPQQQPGGQAP). The segment covering 227 to 244 (RPSDEQMRAIRERIEARR) has biased composition (basic and acidic residues).

Binds to XpsD.

The protein localises to the cell inner membrane. Functionally, involved in a general secretion pathway (GSP) for the export of proteins. The sequence is that of General secretion pathway protein N (xpsN) from Xanthomonas campestris pv. campestris (strain ATCC 33913 / DSM 3586 / NCPPB 528 / LMG 568 / P 25).